Here is a 241-residue protein sequence, read N- to C-terminus: Glucosamine-6-phosphate deaminase (241 aa).

D67 functions as the Proton acceptor; for enolization step in the catalytic mechanism. N136 functions as the For ring-opening step in the catalytic mechanism. H138 functions as the Proton acceptor; for ring-opening step in the catalytic mechanism. E143 (for ring-opening step) is an active-site residue.

Belongs to the glucosamine/galactosamine-6-phosphate isomerase family. NagB subfamily.

It carries out the reaction alpha-D-glucosamine 6-phosphate + H2O = beta-D-fructose 6-phosphate + NH4(+). The protein operates within amino-sugar metabolism; N-acetylneuraminate degradation; D-fructose 6-phosphate from N-acetylneuraminate: step 5/5. Its function is as follows. Catalyzes the reversible isomerization-deamination of glucosamine 6-phosphate (GlcN6P) to form fructose 6-phosphate (Fru6P) and ammonium ion. The chain is Glucosamine-6-phosphate deaminase from Bacillus pumilus (strain SAFR-032).